The chain runs to 187 residues: Large ribosomal subunit protein uL22 (187 aa).

Over residues Val159–Lys171 the composition is skewed to basic and acidic residues. Positions Val159–Phe187 are disordered. Residues Lys172–Phe187 show a composition bias toward basic residues.

Belongs to the universal ribosomal protein uL22 family.

The chain is Large ribosomal subunit protein uL22 (rpl-17) from Caenorhabditis elegans.